A 73-amino-acid chain; its full sequence is UPF0499 protein NFIA_054990 (73 aa).

The first 20 residues, 1-20 (MKSFNLLSLSLLLAIASAAA), serve as a signal peptide directing secretion. 3 disulfides stabilise this stretch: Cys-46-Cys-60, Cys-50-Cys-63, and Cys-56-Cys-70.

It belongs to the UPF0499 family.

It is found in the secreted. In Neosartorya fischeri (strain ATCC 1020 / DSM 3700 / CBS 544.65 / FGSC A1164 / JCM 1740 / NRRL 181 / WB 181) (Aspergillus fischerianus), this protein is UPF0499 protein NFIA_054990.